The sequence spans 311 residues: Forkhead box protein I2 (311 aa).

A DNA-binding region (fork-head) is located at residues 99–193 (RPPYSYSALI…DNGNFRRKRR (95 aa)). Disordered stretches follow at residues 188–237 (FRRK…TTTC) and 263–294 (FSLR…QTGA). The segment covering 219-231 (STPQDPQTSPSPS) has biased composition (low complexity).

Its subcellular location is the nucleus. In terms of biological role, possible transcriptional activator. The sequence is that of Forkhead box protein I2 from Mus musculus (Mouse).